We begin with the raw amino-acid sequence, 245 residues long: tRNA (guanine-N(1)-)-methyltransferase (245 aa).

Residues Gly114 and 133–138 contribute to the S-adenosyl-L-methionine site; that span reads LGDFVI.

Belongs to the RNA methyltransferase TrmD family. In terms of assembly, homodimer.

It is found in the cytoplasm. It carries out the reaction guanosine(37) in tRNA + S-adenosyl-L-methionine = N(1)-methylguanosine(37) in tRNA + S-adenosyl-L-homocysteine + H(+). Specifically methylates guanosine-37 in various tRNAs. The chain is tRNA (guanine-N(1)-)-methyltransferase from Pediococcus pentosaceus (strain ATCC 25745 / CCUG 21536 / LMG 10740 / 183-1w).